The chain runs to 54 residues: Kazal-type inhibitor-like protein (54 aa).

The Kazal-like domain occupies 1–54 (MKVNCKGYPTKFCFGKPLPHCASDGKTYPNRCRFCNAFVKSHGLITLRYYGKCK). Intrachain disulfides connect Cys5/Cys35, Cys13/Cys32, and Cys21/Cys53.

As to quaternary structure, may form disulfide-linked dimers or trimers (in vitro). Expressed by the venom gland.

Its subcellular location is the secreted. In terms of biological role, partially inhibits trypsin in vitro at slightly acidic pH and concentrations in excess of 0.3 mM. Has no protease inhibitory activity at neutral or basic pH. Has no antibacterial activity. Shows no toxicity in vertebrates apart from transient paw edema in mouse. The chain is Kazal-type inhibitor-like protein from Bothriechis schlegelii (Eyelash palm pitviper).